Consider the following 207-residue polypeptide: ATP synthase subunit b 2 (207 aa).

Residues 53–72 traverse the membrane as a helical segment; sequence TYASQLLWLVITFSVFYLLM.

The protein belongs to the ATPase B chain family. In terms of assembly, F-type ATPases have 2 components, F(1) - the catalytic core - and F(0) - the membrane proton channel. F(1) has five subunits: alpha(3), beta(3), gamma(1), delta(1), epsilon(1). F(0) has three main subunits: a(1), b(2) and c(10-14). The alpha and beta chains form an alternating ring which encloses part of the gamma chain. F(1) is attached to F(0) by a central stalk formed by the gamma and epsilon chains, while a peripheral stalk is formed by the delta and b chains.

It localises to the cell inner membrane. F(1)F(0) ATP synthase produces ATP from ADP in the presence of a proton or sodium gradient. F-type ATPases consist of two structural domains, F(1) containing the extramembraneous catalytic core and F(0) containing the membrane proton channel, linked together by a central stalk and a peripheral stalk. During catalysis, ATP synthesis in the catalytic domain of F(1) is coupled via a rotary mechanism of the central stalk subunits to proton translocation. Functionally, component of the F(0) channel, it forms part of the peripheral stalk, linking F(1) to F(0). The b'-subunit is a diverged and duplicated form of b found in plants and photosynthetic bacteria. The polypeptide is ATP synthase subunit b 2 (atpF2) (Rhizobium etli (strain CIAT 652)).